The chain runs to 270 residues: Orotidine 5'-phosphate decarboxylase (270 aa).

Substrate is bound by residues Asp-43, 65–67, 96–105, Tyr-217, and Arg-236; these read KTH and DRKFGDIGST. The Proton donor role is filled by Lys-98.

It belongs to the OMP decarboxylase family.

It carries out the reaction orotidine 5'-phosphate + H(+) = UMP + CO2. It participates in pyrimidine metabolism; UMP biosynthesis via de novo pathway; UMP from orotate: step 2/2. This chain is Orotidine 5'-phosphate decarboxylase (URA3), found in Aureobasidium pullulans (Black yeast).